A 268-amino-acid chain; its full sequence is Protein atz-1 (268 aa).

A coiled-coil region spans residues 171 to 243; the sequence is VDDANKLTEV…EEGEEDYEEE (73 aa). Residues 229–268 are disordered; the sequence is DLMKEEEGEEDYEEEENYEVEEDFEDEEEYDEEGEEEDYE. Over residues 231-268 the composition is skewed to acidic residues; sequence MKEEEGEEDYEEEENYEVEEDFEDEEEYDEEGEEEDYE.

It is found in the nucleus. Plays a role in meiosis, germline development and oocyte morphogenesis. May play a role in DNA replication. In the germline, involved in the maintenance of transition zone nuclei and in chromosome structure and organization, but not required for mitotic proliferation. In Caenorhabditis elegans, this protein is Protein atz-1.